The primary structure comprises 98 residues: Large ribosomal subunit protein bL25 (98 aa).

Residues 1 to 23 form a disordered region; sequence MANFVLNAQARAEDKQGKGASRR.

Belongs to the bacterial ribosomal protein bL25 family. In terms of assembly, part of the 50S ribosomal subunit; part of the 5S rRNA/L5/L18/L25 subcomplex. Contacts the 5S rRNA. Binds to the 5S rRNA independently of L5 and L18.

Its function is as follows. This is one of the proteins that binds to the 5S RNA in the ribosome where it forms part of the central protuberance. The polypeptide is Large ribosomal subunit protein bL25 (Acinetobacter baumannii (strain ATCC 17978 / DSM 105126 / CIP 53.77 / LMG 1025 / NCDC KC755 / 5377)).